Here is a 162-residue protein sequence, read N- to C-terminus: Gas vesicle protein I (162 aa).

The tract at residues 1-162 (MTGKQHQKHE…AERQRGGADE (162 aa)) is disordered. Composition is skewed to basic and acidic residues over residues 22–37 (INRD…QREK) and 47–64 (RQSE…HDTQ). Composition is skewed to polar residues over residues 65 to 74 (SETQRGTQSK) and 81 to 110 (TGGT…SHST). Composition is skewed to basic and acidic residues over residues 122 to 142 (ARER…EDKS) and 151 to 162 (PKAERQRGGADE).

This sequence belongs to the gas vesicle GvpI family. In terms of assembly, gvpF to GvpM interact with each other in vitro, and may form multi-subunit complex(es). Interacts with GvpC and GvpO.

The protein localises to the gas vesicle. Its function is as follows. Proteins GvpF to GvpM might be involved in nucleating gas vesicle formation. A minor component of the gas vesicle. Gas vesicles are hollow, gas filled proteinaceous nanostructures found in some microorganisms. They allow positioning of halobacteria at the optimal depth for growth in the poorly aerated, shallow brine pools of their habitat. Expression of a 9.5 kb mc-vac DNA fragment containing 2 divergently transcribed regions (gvpD-gvpE-gvpF-gvpG-gvpH-gvpI-gvpJ-gvpK-gvpL-gvpM and gvpA-gvpC-gvpN-gvpO) allows H.volcanii to produce gas vesicles. The polypeptide is Gas vesicle protein I (Haloferax mediterranei (strain ATCC 33500 / DSM 1411 / JCM 8866 / NBRC 14739 / NCIMB 2177 / R-4) (Halobacterium mediterranei)).